Here is a 130-residue protein sequence, read N- to C-terminus: Phosphoribosyl-AMP cyclohydrolase (130 aa).

Residue D80 coordinates Mg(2+). Zn(2+) is bound at residue C81. Mg(2+) contacts are provided by D82 and D84. Residues C98 and C105 each coordinate Zn(2+).

It belongs to the PRA-CH family. As to quaternary structure, homodimer. Requires Mg(2+) as cofactor. It depends on Zn(2+) as a cofactor.

The protein localises to the cytoplasm. The enzyme catalyses 1-(5-phospho-beta-D-ribosyl)-5'-AMP + H2O = 1-(5-phospho-beta-D-ribosyl)-5-[(5-phospho-beta-D-ribosylamino)methylideneamino]imidazole-4-carboxamide. The protein operates within amino-acid biosynthesis; L-histidine biosynthesis; L-histidine from 5-phospho-alpha-D-ribose 1-diphosphate: step 3/9. In terms of biological role, catalyzes the hydrolysis of the adenine ring of phosphoribosyl-AMP. The polypeptide is Phosphoribosyl-AMP cyclohydrolase (Oleidesulfovibrio alaskensis (strain ATCC BAA-1058 / DSM 17464 / G20) (Desulfovibrio alaskensis)).